The sequence spans 114 residues: Small ribosomal subunit protein bS6 (114 aa).

It belongs to the bacterial ribosomal protein bS6 family.

In terms of biological role, binds together with bS18 to 16S ribosomal RNA. The polypeptide is Small ribosomal subunit protein bS6 (Hydrogenovibrio crunogenus (strain DSM 25203 / XCL-2) (Thiomicrospira crunogena)).